Here is a 319-residue protein sequence, read N- to C-terminus: Annexin A4 (319 aa).

The residue at position 2 (A2) is an N-acetylalanine. T7 is modified (phosphothreonine; by PKC). Position 12 is a phosphoserine (S12). 4 Annexin repeats span residues 14 to 85 (FNAA…GMMT), 86 to 157 (PTVL…SLSA), 169 to 241 (ALVR…AIVK), and 245 to 316 (NKSA…ILCG). Residues K213, K293, and K300 each carry the N6-acetyllysine modification.

Belongs to the annexin family. As to quaternary structure, monomer.

It is found in the zymogen granule membrane. Its function is as follows. Calcium/phospholipid-binding protein which promotes membrane fusion and is involved in exocytosis. This is Annexin A4 (ANXA4) from Sus scrofa (Pig).